We begin with the raw amino-acid sequence, 125 residues long: MATFKLVISDPKTGIAKQIEITGPEAEKLIGKRIGDQIPVKELGINLNELFGKEFPEDVKMEIRGGTDKDGFPMRPDIHGPRRVRILLSKGPGFRPKEKGERRKKTVRGNTISPEIVQVNVKLVY.

Belongs to the eukaryotic ribosomal protein eS6 family.

In Pyrococcus abyssi (strain GE5 / Orsay), this protein is Small ribosomal subunit protein eS6.